Consider the following 190-residue polypeptide: Photosynthetic NDH subunit of lumenal location 2, chloroplastic (190 aa).

A chloroplast-targeting transit peptide spans 1-31 (MSSFTTTNTPPPYLLRKIYHRRVNQPFSVVC). A thylakoid-targeting transit peptide spans 32 to 68 (CTGEPQQDIFTRRRTLTSLITFTVIGGATSSALAQEK). Coiled coils occupy residues 87–107 (EDAA…REML) and 139–159 (ESRR…MSEL).

It belongs to the PsbQ family. Part of the chloroplast NDH complex, composed of a mixture of chloroplast and nucleus encoded subunits. Component of the NDH lumenal subcomplex, at least composed of PnsL1, PnsL2, PnsL3, PnsL4 and PnsL5.

It localises to the plastid. The protein resides in the chloroplast thylakoid membrane. Its function is as follows. NDH shuttles electrons from NAD(P)H:plastoquinone, via FMN and iron-sulfur (Fe-S) centers, to quinones in the photosynthetic chain and possibly in a chloroplast respiratory chain. The immediate electron acceptor for the enzyme in this species is believed to be plastoquinone. Couples the redox reaction to proton translocation, and thus conserves the redox energy in a proton gradient. Required for both formation and activity of the chloroplast NAD(P)H dehydrogenase (NDH) complex. The polypeptide is Photosynthetic NDH subunit of lumenal location 2, chloroplastic (Arabidopsis thaliana (Mouse-ear cress)).